The following is a 571-amino-acid chain: PHD and RING finger domain-containing protein C126.07c (571 aa).

The RING-type 1; atypical zinc-finger motif lies at 18-79 (CIICLSNLPN…RVANTCPLCR (62 aa)). Residues 122-170 (TCRCVICGRSDHAEVLLLCDGCDDAYHTYCLNMDAVPIEEFYCPNCVLL) form a PHD-type zinc finger. The RING-type 2; degenerate zinc-finger motif lies at 125–168 (CVICGRSDHAEVLLLCDGCDDAYHTYCLNMDAVPIEEFYCPNCV). A compositionally biased stretch (polar residues) spans 305-324 (ATEATISNPRPSSGRFQQTP). The disordered stretch occupies residues 305–377 (ATEATISNPR…VLGNNSSSKS (73 aa)). Basic residues predominate over residues 346–356 (RRQKRPTRRHI). Positions 359 to 377 (SNKSSGSSTVLGNNSSSKS) are enriched in polar residues.

Its subcellular location is the cytoplasm. The protein localises to the nucleus. This chain is PHD and RING finger domain-containing protein C126.07c, found in Schizosaccharomyces pombe (strain 972 / ATCC 24843) (Fission yeast).